Consider the following 360-residue polypeptide: Mannose-1-phosphate guanyltransferase beta-A (360 aa).

Belongs to the transferase hexapeptide repeat family.

The catalysed reaction is alpha-D-mannose 1-phosphate + GTP + H(+) = GDP-alpha-D-mannose + diphosphate. It functions in the pathway nucleotide-sugar biosynthesis; GDP-alpha-D-mannose biosynthesis; GDP-alpha-D-mannose from alpha-D-mannose 1-phosphate (GTP route): step 1/1. The polypeptide is Mannose-1-phosphate guanyltransferase beta-A (gmppb-a) (Xenopus laevis (African clawed frog)).